A 699-amino-acid chain; its full sequence is MPFYKQPWVFSKVFVLAMAKPPSFGCCFFLLFFSFLSSSFVSFALTDTEAAFIVQRQLLTLPDNGELPDDIEYEVDLKATFANTRLKRAYIALQAWKKAIFSDPFNTTGNWHGPHVCGYTGVVCAPALDDSDVTVVAGVDLNGADIAGHLPAELGLMTDVAMFHLNSNRFCGIIPKSFEKLKLMHEFDVSNNRFVGPFPNVVLSWPDVKYFDLRFNDFEGQVPPELFKKELDAIFLNDNRFTSVIPESLGESPASVVTFANNKFTGCIPKSIGNMKNLNEIVFMDNDLGGCFPSEIGKLSNVTVFDASKNSFIGRLPTSFVGLTSVEEIDISGNKLTGLVPHNICQLPNLVNLTYSYNYFSGQGGSCVPGGSRKEIALDDTRNCLASRPEQRSAQECAVVINRPVDCSKDKCAGGSSTPSKPSPVHKPTPVPTTPVHKPTPVPTTPVQKPSPVPTTPVQKPSPVPTTPVHEPSPVLATPVDKPSPVPSRPVQKPQPPKESPQPDDPYDQSPVTKRRSPPPAPVNSPPPPVYSPPPPPPPVHSPPPPVHSPPPPPVYSPPPPPPPVHSPPPPVFSPPPPVYSPPPPVHSPPPPVHSPPPPAPVHSPPPPVHSPPPPPPVYSPPPPVFSPPPSQSPPVVYSPPPRPPKINSPPVQSPPPAPVEKKETPPAHAPAPSDDEFIIPPFIGHQYASPPPPMFAGY.

Residues 1–39 (MPFYKQPWVFSKVFVLAMAKPPSFGCCFFLLFFSFLSSS) form the signal peptide. N-linked (GlcNAc...) asparagine glycosylation occurs at Asn106. 9 LRR repeats span residues 133–157 (VTVV…LGLM), 158–180 (TDVA…SFEK), 182–205 (KLMH…VLSW), 206–229 (PDVK…LFKK), 231–251 (LDAI…SLGE), 253–275 (PASV…IGNM), 276–299 (KNLN…IGKL), 301–323 (NVTV…FVGL), and 324–347 (TSVE…ICQL). A glycan (N-linked (GlcNAc...) asparagine) is linked at Asn301. An N-linked (GlcNAc...) asparagine glycan is attached at Asn352. Residues 411 to 699 (KCAGGSSTPS…SPPPPMFAGY (289 aa)) are disordered. Composition is skewed to pro residues over residues 421 to 466 (KPSP…PVPT), 482 to 504 (KPSP…PQPD), 518 to 659 (PPPA…PPAP), and 690 to 699 (SPPPPMFAGY). Residues 517 to 699 (SPPPAPVNSP…SPPPPMFAGY (183 aa)) are contains the Ser-Pro(4) repeats.

Post-translationally, hydroxylated on proline residues in the S-P-P-P-P repeat. In terms of processing, O-glycosylated on hydroxyprolines. In terms of tissue distribution, expressed in flowers, stamen, pollen, and pollinated carpels.

It is found in the secreted. The protein resides in the cell wall. Functionally, modulates cell morphogenesis by regulating cell wall formation and assembly, and/or growth polarization. This Arabidopsis thaliana (Mouse-ear cress) protein is Pollen-specific leucine-rich repeat extensin-like protein 4 (PEX4).